The sequence spans 390 residues: Odorant receptor 85b (390 aa).

The Cytoplasmic segment spans residues 1–30 (MEKLMKYASFFYTAVGIRPYTNGEESKMNK). A helical membrane pass occupies residues 31 to 51 (LIFHIVFWSNVINLSFVGLFE). The Extracellular segment spans residues 52–66 (SIYVYSAFMDNKFLE). A helical membrane pass occupies residues 67 to 87 (AVTALSYIGFVTVGMSKMFFI). The Cytoplasmic segment spans residues 88-126 (RWKKTAITELINELKEIYPNGLIREERYNLPMYLGTCSR). The helical transmembrane segment at 127–147 (ISLIYSLLYSVLIWTFNLFCV) threads the bilayer. Over 148-200 (MEYWVYDKWLNIRVVGKQLPYLMYIPWKWQDNWSYYPLLFSQNFAGYTSAAGQ) the chain is Extracellular. An N-linked (GlcNAc...) asparagine glycan is attached at N179. Residues 201 to 221 (ISTDVLLCAVATQLVMHFDFL) form a helical membrane-spanning segment. Over 222 to 260 (SNSMERHELSGDWKKDSRFLVDIVRYHERILRLSDAVND) the chain is Cytoplasmic. A helical transmembrane segment spans residues 261–281 (IFGIPLLLNFMVSSFVICFVG). Topologically, residues 282–291 (FQMTVGVPPD) are extracellular. The helical transmembrane segment at 292–312 (IVVKLFLFLVSSMSQVYLICH) threads the bilayer. Over 313 to 360 (YGQLVADASYGFSVATYNQKWYKADVRYKRALVIIIARSQKVTFLKAT) the chain is Cytoplasmic. Residues 361–381 (IFLDITRSTMTDLLQISYKFF) form a helical membrane-spanning segment. Topologically, residues 382–390 (ALLRTMYTQ) are extracellular.

Belongs to the insect chemoreceptor superfamily. Heteromeric odorant receptor channel (TC 1.A.69) family. Or49a subfamily. Interacts with Orco. Complexes exist early in the endomembrane system in olfactory sensory neurons (OSNs), coupling these complexes to the conserved ciliary trafficking pathway. As to expression, expressed in olfactory sensory neurons in the antenna.

It is found in the cell membrane. Its function is as follows. Odorant receptor which mediates acceptance or avoidance behavior, depending on its substrates. The odorant receptor repertoire encodes a large collection of odor stimuli that vary widely in identity, intensity, and duration. Forms a complex with Orco to form odorant-sensing units, providing sensitive and prolonged odorant signaling and calcium permeability. Involved in the behavioral responses to 2-heptanone, amyl acetate, and butyl acetate. The polypeptide is Odorant receptor 85b (Or85b) (Drosophila melanogaster (Fruit fly)).